The chain runs to 729 residues: Pentatricopeptide repeat-containing protein At4g04370 (729 aa).

PPR repeat units follow at residues 10-44 (STKY…KLLP), 45-79 (DTFT…GFSS), 80-110 (DFYI…MRER), 111-145 (DVVH…GIKP), 178-208 (DIAV…MEQR), 209-243 (DMVS…GLRP), 244-278 (DQQT…GFDV), 279-309 (DMHL…IPNK), 310-344 (DVVC…GSDL), 345-379 (SSEA…GYTL), 380-414 (DTPA…DLVS), 415-445 (WNAI…TVQQ), 447-481 (DSFT…FIRP), 482-512 (CSLV…ISWK), 513-547 (DVVS…GMEP), 548-583 (NHVI…GVEP), and 584-618 (NHEH…PSID). Positions 619-694 (VLGIILDACR…LPGWSKIEMN (76 aa)) are type E motif. The type E(+) motif stretch occupies residues 695 to 723 (GKTTTFFMNHTSHSDDTVSLLKLLSREMM).

This sequence belongs to the PPR family. PCMP-E subfamily.

This is Pentatricopeptide repeat-containing protein At4g04370 (PCMP-E99) from Arabidopsis thaliana (Mouse-ear cress).